An 842-amino-acid chain; its full sequence is Glycogen phosphorylase, muscle form (842 aa).

Residue Ser2 is modified to N-acetylserine. At Ser15 the chain carries Phosphoserine; by PHK; in form phosphorylase A. Positions 43 and 76 each coordinate AMP. 2 positions are modified to phosphotyrosine: Tyr204 and Tyr227. 310–319 (RRFKSSKFGC) serves as a coordination point for AMP. Ser430 carries the post-translational modification Phosphoserine. Tyr473 is modified (phosphotyrosine). Lys681 is subject to N6-(pyridoxal phosphate)lysine. 2 positions are modified to phosphoserine: Ser747 and Ser748.

This sequence belongs to the glycogen phosphorylase family. As to quaternary structure, homodimer. Homotetramer; to form the enzymatically active phosphorylase A. Pyridoxal 5'-phosphate serves as cofactor. Phosphorylation of Ser-15 converts phosphorylase B (unphosphorylated) to phosphorylase A.

The catalysed reaction is [(1-&gt;4)-alpha-D-glucosyl](n) + phosphate = [(1-&gt;4)-alpha-D-glucosyl](n-1) + alpha-D-glucose 1-phosphate. Its activity is regulated as follows. Allosterically regulated through the non-covalent binding of metabolites, being activated by AMP and inhibited by ATP, ADP, and glucose-6-phosphate. The activity is also controlled by post-translational modifications including phosphorylation. Its function is as follows. Allosteric enzyme that catalyzes the rate-limiting step in glycogen catabolism, the phosphorolytic cleavage of glycogen to produce glucose-1-phosphate, and plays a central role in maintaining cellular and organismal glucose homeostasis. This Ovis aries (Sheep) protein is Glycogen phosphorylase, muscle form.